Here is a 403-residue protein sequence, read N- to C-terminus: D-alanyl-D-alanine carboxypeptidase DacA (403 aa).

The first 29 residues, 1–29 (MNTIFSARIMKRLALTTALCTAFISAAHA), serve as a signal peptide directing secretion. Ser73 functions as the Acyl-ester intermediate in the catalytic mechanism. Catalysis depends on Lys76, which acts as the Proton acceptor. Ser139 is an active-site residue. Lys242 provides a ligand contact to substrate.

It belongs to the peptidase S11 family.

The protein localises to the cell inner membrane. It catalyses the reaction Preferential cleavage: (Ac)2-L-Lys-D-Ala-|-D-Ala. Also transpeptidation of peptidyl-alanyl moieties that are N-acyl substituents of D-alanine.. It functions in the pathway cell wall biogenesis; peptidoglycan biosynthesis. Removes C-terminal D-alanyl residues from sugar-peptide cell wall precursors. The sequence is that of D-alanyl-D-alanine carboxypeptidase DacA (dacA) from Escherichia coli O157:H7.